Reading from the N-terminus, the 226-residue chain is Cytidylate kinase (226 aa).

12–20 (GPSGAGKGT) contributes to the ATP binding site.

This sequence belongs to the cytidylate kinase family. Type 1 subfamily.

The protein resides in the cytoplasm. It carries out the reaction CMP + ATP = CDP + ADP. The enzyme catalyses dCMP + ATP = dCDP + ADP. This Xanthomonas campestris pv. campestris (strain B100) protein is Cytidylate kinase.